Consider the following 266-residue polypeptide: 5'-nucleotidase SurE (266 aa).

4 residues coordinate a divalent metal cation: D8, D9, S42, and N98.

The protein belongs to the SurE nucleotidase family. A divalent metal cation is required as a cofactor.

It is found in the cytoplasm. It catalyses the reaction a ribonucleoside 5'-phosphate + H2O = a ribonucleoside + phosphate. Its function is as follows. Nucleotidase that shows phosphatase activity on nucleoside 5'-monophosphates. This chain is 5'-nucleotidase SurE, found in Methanocaldococcus jannaschii (strain ATCC 43067 / DSM 2661 / JAL-1 / JCM 10045 / NBRC 100440) (Methanococcus jannaschii).